The chain runs to 72 residues: DNA-directed RNA polymerase subunit epsilon (72 aa).

This sequence belongs to the RNA polymerase subunit epsilon family. In terms of assembly, RNAP is composed of a core of 2 alpha, a beta and a beta' subunit. The core is associated with a delta subunit, and at least one of epsilon or omega. When a sigma factor is associated with the core the holoenzyme is formed, which can initiate transcription.

The enzyme catalyses RNA(n) + a ribonucleoside 5'-triphosphate = RNA(n+1) + diphosphate. In terms of biological role, a non-essential component of RNA polymerase (RNAP). This chain is DNA-directed RNA polymerase subunit epsilon, found in Lactiplantibacillus plantarum (strain ATCC BAA-793 / NCIMB 8826 / WCFS1) (Lactobacillus plantarum).